Here is a 253-residue protein sequence, read N- to C-terminus: Ribosomal RNA small subunit methyltransferase A (253 aa).

The S-adenosyl-L-methionine site is built by H12, L14, G39, E60, D81, and N104.

It belongs to the class I-like SAM-binding methyltransferase superfamily. rRNA adenine N(6)-methyltransferase family. RsmA subfamily.

The protein localises to the cytoplasm. The enzyme catalyses adenosine(1518)/adenosine(1519) in 16S rRNA + 4 S-adenosyl-L-methionine = N(6)-dimethyladenosine(1518)/N(6)-dimethyladenosine(1519) in 16S rRNA + 4 S-adenosyl-L-homocysteine + 4 H(+). In terms of biological role, specifically dimethylates two adjacent adenosines (A1518 and A1519) in the loop of a conserved hairpin near the 3'-end of 16S rRNA in the 30S particle. May play a critical role in biogenesis of 30S subunits. This chain is Ribosomal RNA small subunit methyltransferase A, found in Paracidovorax citrulli (strain AAC00-1) (Acidovorax citrulli).